A 591-amino-acid chain; its full sequence is tRNA 5-methylaminomethyl-2-thiouridine biosynthesis bifunctional protein MnmC (591 aa).

The tract at residues 1 to 232 (MTPTAPSPLV…KRERLEAWRP (232 aa)) is tRNA (mnm(5)s(2)U34)-methyltransferase. An FAD-dependent cmnm(5)s(2)U34 oxidoreductase region spans residues 247–591 (IGGGIAGAAL…FDSPVTRSRL (345 aa)).

It in the N-terminal section; belongs to the methyltransferase superfamily. tRNA (mnm(5)s(2)U34)-methyltransferase family. In the C-terminal section; belongs to the DAO family. The cofactor is FAD.

The protein localises to the cytoplasm. The catalysed reaction is 5-aminomethyl-2-thiouridine(34) in tRNA + S-adenosyl-L-methionine = 5-methylaminomethyl-2-thiouridine(34) in tRNA + S-adenosyl-L-homocysteine + H(+). Catalyzes the last two steps in the biosynthesis of 5-methylaminomethyl-2-thiouridine (mnm(5)s(2)U) at the wobble position (U34) in tRNA. Catalyzes the FAD-dependent demodification of cmnm(5)s(2)U34 to nm(5)s(2)U34, followed by the transfer of a methyl group from S-adenosyl-L-methionine to nm(5)s(2)U34, to form mnm(5)s(2)U34. The protein is tRNA 5-methylaminomethyl-2-thiouridine biosynthesis bifunctional protein MnmC of Caulobacter vibrioides (strain ATCC 19089 / CIP 103742 / CB 15) (Caulobacter crescentus).